A 481-amino-acid polypeptide reads, in one-letter code: Small ribosomal subunit protein bS1 (481 aa).

S1 motif domains are found at residues 36–105 (GDIV…LSKK), 123–188 (DEAV…LSRR), 209–277 (GTIR…LSLK), and 294–363 (GQIV…LSLK). Residues 429 to 467 (TAQMEKFAAAEAAGRGADDQSSASSAPSEKTAGGSLASD) form a disordered region. A compositionally biased stretch (low complexity) spans 437–456 (AAEAAGRGADDQSSASSAPS).

The protein belongs to the bacterial ribosomal protein bS1 family.

Functionally, binds mRNA; thus facilitating recognition of the initiation point. It is needed to translate mRNA with a short Shine-Dalgarno (SD) purine-rich sequence. This chain is Small ribosomal subunit protein bS1 (rpsA), found in Mycobacterium tuberculosis (strain CDC 1551 / Oshkosh).